We begin with the raw amino-acid sequence, 493 residues long: Telomere-binding protein subunit alpha (493 aa).

The disordered stretch occupies residues 1 to 30 (MSSAKRSTSRVSKKKAAPAKDGAPKKREQS). Basic residues predominate over residues 7–17 (STSRVSKKKAA).

Belongs to the telombin family. In terms of assembly, heterodimer of an alpha and a beta subunit.

The protein localises to the nucleus. Its subcellular location is the chromosome. It is found in the telomere. May function as protective capping of the single-stranded telomeric overhang. May also participate in telomere length regulation during DNA replication. The chain is Telomere-binding protein subunit alpha (STY56V) from Stylonychia mytilus (Ciliate).